A 255-amino-acid polypeptide reads, in one-letter code: Type III pantothenate kinase (255 aa).

7–14 (DVGNTRLK) contacts ATP. Residues Tyr-96 and 103–106 (GADR) contribute to the substrate site. Catalysis depends on Asp-105, which acts as the Proton acceptor. Thr-133 serves as a coordination point for ATP. Thr-183 is a substrate binding site.

The protein belongs to the type III pantothenate kinase family. As to quaternary structure, homodimer. NH4(+) serves as cofactor. The cofactor is K(+).

The protein resides in the cytoplasm. The enzyme catalyses (R)-pantothenate + ATP = (R)-4'-phosphopantothenate + ADP + H(+). Its pathway is cofactor biosynthesis; coenzyme A biosynthesis; CoA from (R)-pantothenate: step 1/5. Catalyzes the phosphorylation of pantothenate (Pan), the first step in CoA biosynthesis. The polypeptide is Type III pantothenate kinase (Polaromonas sp. (strain JS666 / ATCC BAA-500)).